The following is a 791-amino-acid chain: MASPSEQYIFGEFSDDEFKQFFVTARCTVELPPYNEHFFPCGPQSSGDFQDGEECPRIEFGIEEVIDHNTTLPNNTDYSISSNLNPQAPEFILTCSSSPKDSNNVLHENNFDAIDCQFSESSIPDGSGNADSDGTSGTGQRERKKKKKRPPGYYSYLEGVGDVPSETLLNGHANSAGLNSISTDDPDLAEDIPISTTSPRTCTSPDNFVDLNNEALSDDASMHNVLDNTRTAGQPEECSVTSSEQSCIPSDNGRESPVRTAVVQPFAGTDTTENLGVTNGQTLESPEEDTASNGVVLHPEVISLSEEAKAEEISTAQAVIHLPGSASANAPAKSWASLFHNSKPSSTPQVAYVETKNTPPVTSLQVTEKQVEIKEGPVPVSEDPVAIKIAELLEEVKLVHKPVSLQPRGLINKGNWCYINATLQALVACPPMYHLMKSIPVYTKAQKPCTSTPMIDSFVRLMNEFTNMPILPKAKQAPGEKVVRDIRPGAPFEPAYIYRLLTVFKSSLSEKGRQEDAEEYLGFILNGLHEEMLALKKLLLPQNDKIHINNGPDPVFATEEVNKEEQEGSDEEWEQVGPRNKSSVTRQADFVQTPITDIFGGHMRSVVYQQSSKESATLQPFFTLQLDIQSEKIRTVQDALESLVARESVQGYTTKTKQEVEICRRVTLEELPPVLVLHLKRFVFEKTGGCQKLIKNIEYPVDLEISKDLLSPGVKSKIFKGQRTYRLFAVVYHHGNSATGGHYTTDVFQIGLNGWLRIDDQTVKVINQYQVVKQTVERTAYLLYYRRVDLL.

2 stretches are compositionally biased toward polar residues: residues 118–139 and 270–284; these read FSES…SGTG and DTTE…QTLE. 2 disordered regions span residues 118–156 and 270–291; these read FSES…YYSY and DTTE…EDTA. The 381-residue stretch at 408–788 folds into the USP domain; it reads RGLINKGNWC…TAYLLYYRRV (381 aa). Catalysis depends on cysteine 417, which acts as the Nucleophile. A disordered region spans residues 560 to 580; it reads EVNKEEQEGSDEEWEQVGPRN. Catalysis depends on histidine 742, which acts as the Proton acceptor.

The protein belongs to the peptidase C19 family. USP10 subfamily.

The protein localises to the cytoplasm. It localises to the nucleus. The catalysed reaction is Thiol-dependent hydrolysis of ester, thioester, amide, peptide and isopeptide bonds formed by the C-terminal Gly of ubiquitin (a 76-residue protein attached to proteins as an intracellular targeting signal).. Its function is as follows. Hydrolase that can remove conjugated ubiquitin from target proteins such as p53/tp53, rps2/us5, rps3/us3, rps10/eS10, becn1, snx3 and cftr. Acts as an essential regulator of p53/tp53 stability: in unstressed cells, specifically deubiquitinates p53/tp53 in the cytoplasm, leading to counteracts MDM2 action and stabilize p53/tp53. Following DNA damage, translocates to the nucleus and deubiquitinates p53/tp53, leading to regulate the p53/TP53-dependent DNA damage response. Component of a regulatory loop that controls autophagy and p53/tp53 levels. Plays a key role in 40S ribosome subunit recycling when a ribosome has stalled during translation: acts both by inhibiting formation of stress granules, which store stalled translation pre-initiation complexes, and mediating deubiquitination of 40S ribosome subunits. Deubiquitinates cftr in early endosomes, enhancing its endocytic recycling. In Xenopus laevis (African clawed frog), this protein is Ubiquitin carboxyl-terminal hydrolase 10-A (usp10-a).